Here is a 235-residue protein sequence, read N- to C-terminus: Probable septum site-determining protein MinC (235 aa).

Residues 104–125 (KAVRPAPVEPATPSEPPQNANP) form a disordered region. Residues 110–119 (PVEPATPSEP) show a composition bias toward pro residues.

The protein belongs to the MinC family. Interacts with MinD and FtsZ.

Functionally, cell division inhibitor that blocks the formation of polar Z ring septums. Rapidly oscillates between the poles of the cell to destabilize FtsZ filaments that have formed before they mature into polar Z rings. Prevents FtsZ polymerization. The polypeptide is Probable septum site-determining protein MinC (Salmonella agona (strain SL483)).